Here is a 595-residue protein sequence, read N- to C-terminus: Cyclin-dependent kinase-like 3 (595 aa).

One can recognise a Protein kinase domain in the interval 4 to 286; that stretch reads YETLGKVGEG…STDLLRHDYF (283 aa). ATP is bound by residues 10-18 and K33; that span reads VGEGSYGTV. Residues 45-51 carry the [NKR]KIAxRE motif; the sequence is KIATREI. The Proton acceptor role is filled by D125. Residue T158 is modified to Phosphothreonine. Residue Y160 is modified to Phosphotyrosine. Disordered stretches follow at residues 362-427, 448-513, and 551-586; these read VIKA…PHAG, SSNL…NKRK, and RESKKTDSSKIPTLLSMDPNQEKQEGGDGDCEGKNL. Residues 368–386 show a composition bias toward basic and acidic residues; it reads GKGDVPDQKKPEYEGDHRQ. Residues 387–397 are compositionally biased toward polar residues; sequence QGTADDTQPSS. Residues 448 to 457 are compositionally biased toward low complexity; sequence SSNLSHPNSR. Composition is skewed to polar residues over residues 468–491 and 499–509; these read SSQTIGQTLSNSRQEDTGPTQVQT and RTGQNDQISSG. A compositionally biased stretch (basic and acidic residues) spans 570–585; the sequence is NQEKQEGGDGDCEGKN.

Belongs to the protein kinase superfamily. CMGC Ser/Thr protein kinase family. CDC2/CDKX subfamily.

The protein localises to the cytoplasm. The catalysed reaction is L-seryl-[protein] + ATP = O-phospho-L-seryl-[protein] + ADP + H(+). The enzyme catalyses L-threonyl-[protein] + ATP = O-phospho-L-threonyl-[protein] + ADP + H(+). This chain is Cyclin-dependent kinase-like 3, found in Mus musculus (Mouse).